Here is a 358-residue protein sequence, read N- to C-terminus: Phospho-N-acetylmuramoyl-pentapeptide-transferase (358 aa).

10 consecutive transmembrane segments (helical) span residues 26–46, 70–90, 94–114, 134–154, 169–189, 197–217, 234–254, 261–281, 286–306, and 335–355; these read AIYA…WLID, GTPT…TLLW, TNVY…VGFV, MLWL…YPPF, ELGL…SNAV, GLAI…AYLA, AGEL…FLWF, VFMG…IAVI, IVLV…IVQV, and KIIV…LSTL.

This sequence belongs to the glycosyltransferase 4 family. MraY subfamily. Requires Mg(2+) as cofactor.

It localises to the cell inner membrane. It catalyses the reaction UDP-N-acetyl-alpha-D-muramoyl-L-alanyl-gamma-D-glutamyl-meso-2,6-diaminopimeloyl-D-alanyl-D-alanine + di-trans,octa-cis-undecaprenyl phosphate = di-trans,octa-cis-undecaprenyl diphospho-N-acetyl-alpha-D-muramoyl-L-alanyl-D-glutamyl-meso-2,6-diaminopimeloyl-D-alanyl-D-alanine + UMP. Its pathway is cell wall biogenesis; peptidoglycan biosynthesis. Catalyzes the initial step of the lipid cycle reactions in the biosynthesis of the cell wall peptidoglycan: transfers peptidoglycan precursor phospho-MurNAc-pentapeptide from UDP-MurNAc-pentapeptide onto the lipid carrier undecaprenyl phosphate, yielding undecaprenyl-pyrophosphoryl-MurNAc-pentapeptide, known as lipid I. The polypeptide is Phospho-N-acetylmuramoyl-pentapeptide-transferase (Syntrophotalea carbinolica (strain DSM 2380 / NBRC 103641 / GraBd1) (Pelobacter carbinolicus)).